Here is a 443-residue protein sequence, read N- to C-terminus: ATP-dependent protease ATPase subunit HslU (443 aa).

ATP-binding positions include Ile20, 62 to 67 (GVGKTE), Asp255, Glu321, and Arg393.

It belongs to the ClpX chaperone family. HslU subfamily. A double ring-shaped homohexamer of HslV is capped on each side by a ring-shaped HslU homohexamer. The assembly of the HslU/HslV complex is dependent on binding of ATP.

It localises to the cytoplasm. Its function is as follows. ATPase subunit of a proteasome-like degradation complex; this subunit has chaperone activity. The binding of ATP and its subsequent hydrolysis by HslU are essential for unfolding of protein substrates subsequently hydrolyzed by HslV. HslU recognizes the N-terminal part of its protein substrates and unfolds these before they are guided to HslV for hydrolysis. The chain is ATP-dependent protease ATPase subunit HslU from Helicobacter pylori (strain Shi470).